A 474-amino-acid chain; its full sequence is 6-phospho-beta-galactosidase (474 aa).

Positions 19, 116, 159, 160, and 297 each coordinate D-galactose 6-phosphate. The Proton donor role is filled by E160. Catalysis depends on E375, which acts as the Nucleophile. D-galactose 6-phosphate contacts are provided by S433, W434, K440, and Y442.

It belongs to the glycosyl hydrolase 1 family.

It carries out the reaction a 6-phospho-beta-D-galactoside + H2O = D-galactose 6-phosphate + an alcohol. It functions in the pathway carbohydrate metabolism; lactose degradation; D-galactose 6-phosphate and beta-D-glucose from lactose 6-phosphate: step 1/1. The chain is 6-phospho-beta-galactosidase from Lacticaseibacillus casei (strain BL23) (Lactobacillus casei).